A 1142-amino-acid polypeptide reads, in one-letter code: Error-prone DNA polymerase (1142 aa).

Residues 291-361 (TSSPAQAARE…GTGAAAGTDR (71 aa)) are disordered. Low complexity-rich tracts occupy residues 311–320 (LRASLPAERP) and 327–344 (GPAA…PGEP). Gly residues predominate over residues 345 to 355 (GLAGAGGGTGA).

Belongs to the DNA polymerase type-C family. DnaE2 subfamily.

It is found in the cytoplasm. The enzyme catalyses DNA(n) + a 2'-deoxyribonucleoside 5'-triphosphate = DNA(n+1) + diphosphate. Functionally, DNA polymerase involved in damage-induced mutagenesis and translesion synthesis (TLS). It is not the major replicative DNA polymerase. The polypeptide is Error-prone DNA polymerase (Anaeromyxobacter dehalogenans (strain 2CP-1 / ATCC BAA-258)).